Here is a 376-residue protein sequence, read N- to C-terminus: Succinyl-diaminopimelate desuccinylase (376 aa).

His-67 is a binding site for Zn(2+). Residue Asp-69 is part of the active site. Asp-100 provides a ligand contact to Zn(2+). Glu-134 (proton acceptor) is an active-site residue. Glu-135, Glu-163, and His-349 together coordinate Zn(2+).

It belongs to the peptidase M20A family. DapE subfamily. In terms of assembly, homodimer. It depends on Zn(2+) as a cofactor. Requires Co(2+) as cofactor.

The catalysed reaction is N-succinyl-(2S,6S)-2,6-diaminopimelate + H2O = (2S,6S)-2,6-diaminopimelate + succinate. Its pathway is amino-acid biosynthesis; L-lysine biosynthesis via DAP pathway; LL-2,6-diaminopimelate from (S)-tetrahydrodipicolinate (succinylase route): step 3/3. In terms of biological role, catalyzes the hydrolysis of N-succinyl-L,L-diaminopimelic acid (SDAP), forming succinate and LL-2,6-diaminopimelate (DAP), an intermediate involved in the bacterial biosynthesis of lysine and meso-diaminopimelic acid, an essential component of bacterial cell walls. In Actinobacillus succinogenes (strain ATCC 55618 / DSM 22257 / CCUG 43843 / 130Z), this protein is Succinyl-diaminopimelate desuccinylase.